Consider the following 37-residue polypeptide: Dolichyl-diphosphooligosaccharide--protein glycosyltransferase subunit 4 (37 aa).

Over 1-4 (MITD) the chain is Lumenal. Residues 5-25 (VQLAIFANMLGVSLFLLVVLY) traverse the membrane as a helical segment. The Cytoplasmic segment spans residues 26–37 (HYVAVNNPKKQE).

The protein belongs to the OST4 family. In terms of assembly, component of the oligosaccharyltransferase (OST) complex. OST exists in two different complex forms which contain common core subunits RPN1, RPN2, OST48, OST4, DAD1 and TMEM258, either STT3A or STT3B as catalytic subunits, and form-specific accessory subunits. STT3A complex assembly occurs through the formation of 3 subcomplexes. Subcomplex 1 contains RPN1 and TMEM258, subcomplex 2 contains the STT3A-specific subunits STT3A, DC2/OSTC, and KCP2 as well as the core subunit OST4, and subcomplex 3 contains RPN2, DAD1, and OST48. The STT3A complex can form stable complexes with the Sec61 complex or with both the Sec61 and TRAP complexes.

It localises to the endoplasmic reticulum. The protein resides in the endoplasmic reticulum membrane. Its pathway is protein modification; protein glycosylation. Its function is as follows. Subunit of the oligosaccharyl transferase (OST) complex that catalyzes the initial transfer of a defined glycan (Glc(3)Man(9)GlcNAc(2) in eukaryotes) from the lipid carrier dolichol-pyrophosphate to an asparagine residue within an Asn-X-Ser/Thr consensus motif in nascent polypeptide chains, the first step in protein N-glycosylation. N-glycosylation occurs cotranslationally and the complex associates with the Sec61 complex at the channel-forming translocon complex that mediates protein translocation across the endoplasmic reticulum (ER). All subunits are required for a maximal enzyme activity. Specifically involved in maintaining stability of STT3A-containing OST complexes. The sequence is that of Dolichyl-diphosphooligosaccharide--protein glycosyltransferase subunit 4 from Homo sapiens (Human).